A 269-amino-acid chain; its full sequence is Formamidopyrimidine-DNA glycosylase (269 aa).

The Schiff-base intermediate with DNA role is filled by Pro-2. Residue Glu-3 is the Proton donor of the active site. The active-site Proton donor; for beta-elimination activity is the Lys-57. 3 residues coordinate DNA: His-90, Arg-109, and Lys-150. An FPG-type zinc finger spans residues 235 to 269 (QVYGKAGESCPECGEAIQELKIGQRNTFYCSYCQC). The active-site Proton donor; for delta-elimination activity is the Arg-259.

It belongs to the FPG family. In terms of assembly, monomer. It depends on Zn(2+) as a cofactor.

It carries out the reaction Hydrolysis of DNA containing ring-opened 7-methylguanine residues, releasing 2,6-diamino-4-hydroxy-5-(N-methyl)formamidopyrimidine.. The catalysed reaction is 2'-deoxyribonucleotide-(2'-deoxyribose 5'-phosphate)-2'-deoxyribonucleotide-DNA = a 3'-end 2'-deoxyribonucleotide-(2,3-dehydro-2,3-deoxyribose 5'-phosphate)-DNA + a 5'-end 5'-phospho-2'-deoxyribonucleoside-DNA + H(+). In terms of biological role, involved in base excision repair of DNA damaged by oxidation or by mutagenic agents. Acts as a DNA glycosylase that recognizes and removes damaged bases. Has a preference for oxidized purines, such as 7,8-dihydro-8-oxoguanine (8-oxoG). Has AP (apurinic/apyrimidinic) lyase activity and introduces nicks in the DNA strand. Cleaves the DNA backbone by beta-delta elimination to generate a single-strand break at the site of the removed base with both 3'- and 5'-phosphates. The protein is Formamidopyrimidine-DNA glycosylase of Vibrio vulnificus (strain YJ016).